Consider the following 217-residue polypeptide: MRLVLVGPPGAGKGTQAEFVAAHLAVPKISTGDIFRSNVSQGTPLGVQAKRYMDAGELVPDEVTINMVRDRLAEPDAGEGFLLDGFPRTTPQAAALDKLLVDLGTALDLVLELVVDDDEVIRRLSGRRTCRGCGKVWHVEFDAPSQEGRCDRCGAELFQRDDDKPETIATRLREYADKTAPLVDYYGAQSKLVGIDATGPVEDVTVRAIDALRSYSG.

ATP is bound at residue 10–15 (GAGKGT). The segment at 30 to 59 (STGDIFRSNVSQGTPLGVQAKRYMDAGELV) is NMP. Residues Thr31, Arg36, 57-59 (ELV), 85-88 (GFPR), and Gln92 each bind AMP. Residues 126 to 163 (GRRTCRGCGKVWHVEFDAPSQEGRCDRCGAELFQRDDD) are LID. Residue Arg127 coordinates ATP. Cys130, Cys133, Cys150, and Cys153 together coordinate Zn(2+). AMP is bound by residues Arg160 and Arg171. Residue Gly199 coordinates ATP.

The protein belongs to the adenylate kinase family. Monomer.

It is found in the cytoplasm. The catalysed reaction is AMP + ATP = 2 ADP. It participates in purine metabolism; AMP biosynthesis via salvage pathway; AMP from ADP: step 1/1. Its function is as follows. Catalyzes the reversible transfer of the terminal phosphate group between ATP and AMP. Plays an important role in cellular energy homeostasis and in adenine nucleotide metabolism. This is Adenylate kinase from Salinispora tropica (strain ATCC BAA-916 / DSM 44818 / JCM 13857 / NBRC 105044 / CNB-440).